The chain runs to 163 residues: ADP-ribosylation factor-like protein 2-binding protein (163 aa).

This sequence belongs to the ARL2BP family. In terms of assembly, interacts with GTP bound ARL2 and ARL3; the complex ARL2-ARL2BP as well as ARL2BP alone, binds to SLC25A4/ANT1. Interaction with ARL2 may be required for cilia basal body localization. Interacts with STAT3; interaction is enhanced with ARL2. Found in a complex with ARL2BP, ARL2 and SLC25A6. Found in a complex with ARL2, ARL2BP and SLC25A4. Interacts with STAT2, STAT3 and STAT4.

It localises to the cytoplasm. The protein resides in the mitochondrion intermembrane space. The protein localises to the cytoskeleton. It is found in the microtubule organizing center. Its subcellular location is the centrosome. It localises to the nucleus. The protein resides in the spindle. The protein localises to the cilium basal body. Its function is as follows. Together with ARL2, plays a role in the nuclear translocation, retention and transcriptional activity of STAT3. May play a role as an effector of ARL2. The protein is ADP-ribosylation factor-like protein 2-binding protein (ARL2BP) of Pongo abelii (Sumatran orangutan).